Consider the following 397-residue polypeptide: Acetylornithine aminotransferase (397 aa).

F129 is a binding site for pyridoxal 5'-phosphate. N(2)-acetyl-L-ornithine is bound at residue R132. 214 to 217 (DEVQ) contacts pyridoxal 5'-phosphate. Position 243 is an N6-(pyridoxal phosphate)lysine (K243). A N(2)-acetyl-L-ornithine-binding site is contributed by S271. T272 contributes to the pyridoxal 5'-phosphate binding site.

Belongs to the class-III pyridoxal-phosphate-dependent aminotransferase family. ArgD subfamily. As to quaternary structure, homodimer. It depends on pyridoxal 5'-phosphate as a cofactor.

The protein resides in the cytoplasm. It catalyses the reaction N(2)-acetyl-L-ornithine + 2-oxoglutarate = N-acetyl-L-glutamate 5-semialdehyde + L-glutamate. It functions in the pathway amino-acid biosynthesis; L-arginine biosynthesis; N(2)-acetyl-L-ornithine from L-glutamate: step 4/4. This is Acetylornithine aminotransferase from Neisseria meningitidis serogroup A / serotype 4A (strain DSM 15465 / Z2491).